A 34-amino-acid polypeptide reads, in one-letter code: Photosystem II reaction center protein M (34 aa).

Residues 5 to 25 (ILAFIAIVLFISVPTAFLLII) form a helical membrane-spanning segment.

The protein belongs to the PsbM family. PSII is composed of 1 copy each of membrane proteins PsbA, PsbB, PsbC, PsbD, PsbE, PsbF, PsbH, PsbI, PsbJ, PsbK, PsbL, PsbM, PsbT, PsbX, PsbY, PsbZ, Psb30/Ycf12, at least 3 peripheral proteins of the oxygen-evolving complex and a large number of cofactors. It forms dimeric complexes.

The protein resides in the plastid. It is found in the chloroplast thylakoid membrane. Functionally, one of the components of the core complex of photosystem II (PSII). PSII is a light-driven water:plastoquinone oxidoreductase that uses light energy to abstract electrons from H(2)O, generating O(2) and a proton gradient subsequently used for ATP formation. It consists of a core antenna complex that captures photons, and an electron transfer chain that converts photonic excitation into a charge separation. This subunit is found at the monomer-monomer interface. The chain is Photosystem II reaction center protein M from Cycas taitungensis (Prince sago).